A 409-amino-acid polypeptide reads, in one-letter code: LIM/homeobox protein ttx-3 (409 aa).

2 LIM zinc-binding domains span residues 108-169 and 171-232; these read NQCC…RYQK and CRKC…VRST. Disordered regions lie at residues 245-299 and 372-409; these read AVVA…RTSF and MNPP…YTHL. Residues 247 to 267 are compositionally biased toward pro residues; the sequence is VAPPPPPPTTTTAPPPAAPEQ. Positions 292–351 form a DNA-binding region, homeobox; sequence SKRMRTSFKHHQLRAMKTYFALNHNPDAKDLKQLAAKTNLTKRVLQVWFQNARAKYRREL. Positions 382–409 are enriched in polar residues; sequence GHSTDGYQLNTPPLSSEIYSPNSNYTHL.

As to expression, expressed in the AIA, AIN and AIY interneurons, and in the NSM neurons. Expressed also in ADL and ASI sensory neurons in 60-70% of L2 larvae. Expression is also detected in head muscles of embryos and some early larvae but not late larvae or adults.

The protein resides in the nucleus. The protein localises to the perikaryon. It is found in the cell projection. Its subcellular location is the axon. Transcription factor. Binds to a sequence motif, 5'-TTATTGGCTTCGTTAA-3', which may be involved in AIY interneuron function, in the regulatory elements of target genes; binding is more efficient, in vitro, together with homeobox protein ceh-10. Required for specification of the AIA and AIY interneurons and the NSM neurons. Positively regulates the expression of a number of genes including ceh-10, ceh-23, kal-1, hen-1, ser-2, unc-17 and sra-11 in AIY neurons, and cat-4, flp-4, bas-1, ptps-1 and mgl-1 in NSM neurons. In concert with WNT/beta-catenin signaling, initiates expression of homeobox ceh-10 in AIY, but not in the sister cells, SMDD motor neurons. Also acts in an autoregulatory feedback loop to maintain its own expression. Plays a role in the thermotactic response, olfactory imprinting, regulation of longevity, control of dauer formation and axon outgrowth and pathfinding. Not required for normal chemosensory behavior. In Caenorhabditis elegans, this protein is LIM/homeobox protein ttx-3.